A 383-amino-acid chain; its full sequence is Probable protein phosphatase 2C 13 (383 aa).

The PPM-type phosphatase domain maps to 78–349 (RSGSFADIRS…DNMTVIVICF (272 aa)). Mn(2+)-binding residues include Asp121, Gly122, Asp297, and Asp340.

The protein belongs to the PP2C family. Mg(2+) serves as cofactor. Mn(2+) is required as a cofactor.

The catalysed reaction is O-phospho-L-seryl-[protein] + H2O = L-seryl-[protein] + phosphate. It catalyses the reaction O-phospho-L-threonyl-[protein] + H2O = L-threonyl-[protein] + phosphate. The protein is Probable protein phosphatase 2C 13 of Arabidopsis thaliana (Mouse-ear cress).